A 572-amino-acid chain; its full sequence is Squalene synthase (572 aa).

2 helical membrane passes run 316-336 (SVFNFCAIPQVMAIATLELMF) and 492-512 (FFLIILVGMVTFMGIVALITW).

This sequence belongs to the phytoene/squalene synthase family. As to quaternary structure, monomer. Requires Mg(2+) as cofactor.

It localises to the endoplasmic reticulum membrane. It catalyses the reaction 2 (2E,6E)-farnesyl diphosphate + NADPH + H(+) = squalene + 2 diphosphate + NADP(+). The enzyme catalyses 2 (2E,6E)-farnesyl diphosphate + NADH + H(+) = squalene + 2 diphosphate + NAD(+). It participates in terpene metabolism; lanosterol biosynthesis; lanosterol from farnesyl diphosphate: step 1/3. Its function is as follows. Catalyzes the condensation of 2 two farnesyl pyrophosphate moieties to form squalene. It is the first committed enzyme of the sterol biosynthesis pathway. Required for the biosynthesis of ergosterol. This chain is Squalene synthase (ERG9), found in Mycosarcoma maydis (Corn smut fungus).